The primary structure comprises 141 residues: Hemoglobin subunit alpha (141 aa).

The 141-residue stretch at 1 to 141 (VLSPADKTNV…VSTVLTSKYR (141 aa)) folds into the Globin domain. A Phosphoserine modification is found at Ser-3. An N6-succinyllysine modification is found at Lys-7. Phosphothreonine is present on Thr-8. The residue at position 11 (Lys-11) is an N6-succinyllysine. Position 16 is an N6-acetyllysine; alternate (Lys-16). At Lys-16 the chain carries N6-succinyllysine; alternate. Phosphotyrosine is present on Tyr-24. Residue Ser-35 is modified to Phosphoserine. Lys-40 carries the N6-succinyllysine modification. Ser-49 is modified (phosphoserine). His-58 provides a ligand contact to O2. His-87 is a heme b binding site. At Ser-102 the chain carries Phosphoserine. Thr-108 is subject to Phosphothreonine. Phosphoserine occurs at positions 124 and 131. A phosphothreonine mark is found at Thr-134 and Thr-137. Ser-138 bears the Phosphoserine mark.

Belongs to the globin family. Heterotetramer of two alpha chains and two beta chains. As to expression, red blood cells.

Functionally, involved in oxygen transport from the lung to the various peripheral tissues. Hemopressin acts as an antagonist peptide of the cannabinoid receptor CNR1. Hemopressin-binding efficiently blocks cannabinoid receptor CNR1 and subsequent signaling. This Taphozous georgianus (Sharp-nosed tomb bat) protein is Hemoglobin subunit alpha (HBA).